We begin with the raw amino-acid sequence, 349 residues long: Methylthioribose-1-phosphate isomerase (349 aa).

Substrate contacts are provided by residues 49-51 (RGA), R93, and Q201. D242 functions as the Proton donor in the catalytic mechanism. 252 to 253 (NK) serves as a coordination point for substrate.

Belongs to the EIF-2B alpha/beta/delta subunits family. MtnA subfamily.

The enzyme catalyses 5-(methylsulfanyl)-alpha-D-ribose 1-phosphate = 5-(methylsulfanyl)-D-ribulose 1-phosphate. The protein operates within amino-acid biosynthesis; L-methionine biosynthesis via salvage pathway; L-methionine from S-methyl-5-thio-alpha-D-ribose 1-phosphate: step 1/6. Catalyzes the interconversion of methylthioribose-1-phosphate (MTR-1-P) into methylthioribulose-1-phosphate (MTRu-1-P). This Petrotoga mobilis (strain DSM 10674 / SJ95) protein is Methylthioribose-1-phosphate isomerase.